The primary structure comprises 657 residues: Glycogen debranching enzyme (657 aa).

The Nucleophile role is filled by Asp-336. Catalysis depends on Glu-371, which acts as the Proton donor. A disordered region spans residues 460-479 (ANGEENRDGTNNNYSNNHGK).

The protein belongs to the glycosyl hydrolase 13 family.

It carries out the reaction Hydrolysis of (1-&gt;6)-alpha-D-glucosidic linkages to branches with degrees of polymerization of three or four glucose residues in limit dextrin.. It functions in the pathway glycan degradation; glycogen degradation. Its function is as follows. Removes maltotriose and maltotetraose chains that are attached by 1,6-alpha-linkage to the limit dextrin main chain, generating a debranched limit dextrin. The sequence is that of Glycogen debranching enzyme from Escherichia coli O9:H4 (strain HS).